A 156-amino-acid chain; its full sequence is Small ribosomal subunit protein bS18c (156 aa).

Positions 1-54 (MYTSKQPFLKSKQPFRKSKQPFRKSKQPFRKFKKPFRKSKQPFRRRPRIGPGDR) are disordered. A compositionally biased stretch (basic residues) spans 13 to 48 (QPFRKSKQPFRKSKQPFRKFKKPFRKSKQPFRRRPR).

This sequence belongs to the bacterial ribosomal protein bS18 family. As to quaternary structure, part of the 30S ribosomal subunit.

Its subcellular location is the plastid. The protein resides in the chloroplast. This is Small ribosomal subunit protein bS18c from Lolium perenne (Perennial ryegrass).